The chain runs to 259 residues: Thiazole synthase (259 aa).

The active-site Schiff-base intermediate with DXP is the Lys98. Residues Gly159, 185 to 186, and 207 to 208 contribute to the 1-deoxy-D-xylulose 5-phosphate site; these read AG and NS.

The protein belongs to the ThiG family. As to quaternary structure, homotetramer. Forms heterodimers with either ThiH or ThiS.

Its subcellular location is the cytoplasm. It carries out the reaction [ThiS sulfur-carrier protein]-C-terminal-Gly-aminoethanethioate + 2-iminoacetate + 1-deoxy-D-xylulose 5-phosphate = [ThiS sulfur-carrier protein]-C-terminal Gly-Gly + 2-[(2R,5Z)-2-carboxy-4-methylthiazol-5(2H)-ylidene]ethyl phosphate + 2 H2O + H(+). Its pathway is cofactor biosynthesis; thiamine diphosphate biosynthesis. Catalyzes the rearrangement of 1-deoxy-D-xylulose 5-phosphate (DXP) to produce the thiazole phosphate moiety of thiamine. Sulfur is provided by the thiocarboxylate moiety of the carrier protein ThiS. In vitro, sulfur can be provided by H(2)S. This Chlorobium limicola (strain DSM 245 / NBRC 103803 / 6330) protein is Thiazole synthase.